Here is a 178-residue protein sequence, read N- to C-terminus: ATP-dependent protease subunit HslV (178 aa).

The active site involves T7. Residues G162, C165, and T168 each coordinate Na(+).

It belongs to the peptidase T1B family. HslV subfamily. A double ring-shaped homohexamer of HslV is capped on each side by a ring-shaped HslU homohexamer. The assembly of the HslU/HslV complex is dependent on binding of ATP.

The protein resides in the cytoplasm. The catalysed reaction is ATP-dependent cleavage of peptide bonds with broad specificity.. Allosterically activated by HslU binding. In terms of biological role, protease subunit of a proteasome-like degradation complex believed to be a general protein degrading machinery. This chain is ATP-dependent protease subunit HslV, found in Cupriavidus taiwanensis (strain DSM 17343 / BCRC 17206 / CCUG 44338 / CIP 107171 / LMG 19424 / R1) (Ralstonia taiwanensis (strain LMG 19424)).